Consider the following 924-residue polypeptide: Protein translocase subunit SecA (924 aa).

ATP is bound by residues Gln87, 105–109 (GEGKT), and Asp517. Residues 886–906 (VPAADRDPNDPSTWGKVGRNE) are disordered. Positions 908, 910, 919, and 920 each coordinate Zn(2+).

The protein belongs to the SecA family. In terms of assembly, monomer and homodimer. Part of the essential Sec protein translocation apparatus which comprises SecA, SecYEG and auxiliary proteins SecDF-YajC and YidC. It depends on Zn(2+) as a cofactor.

The protein localises to the cell inner membrane. It is found in the cytoplasm. It carries out the reaction ATP + H2O + cellular proteinSide 1 = ADP + phosphate + cellular proteinSide 2.. In terms of biological role, part of the Sec protein translocase complex. Interacts with the SecYEG preprotein conducting channel. Has a central role in coupling the hydrolysis of ATP to the transfer of proteins into and across the cell membrane, serving both as a receptor for the preprotein-SecB complex and as an ATP-driven molecular motor driving the stepwise translocation of polypeptide chains across the membrane. The protein is Protein translocase subunit SecA of Azorhizobium caulinodans (strain ATCC 43989 / DSM 5975 / JCM 20966 / LMG 6465 / NBRC 14845 / NCIMB 13405 / ORS 571).